We begin with the raw amino-acid sequence, 406 residues long: Peptidase T (406 aa).

His-81 provides a ligand contact to Zn(2+). Residue Asp-83 is part of the active site. Residue Asp-142 coordinates Zn(2+). Catalysis depends on Glu-176, which acts as the Proton acceptor. Residues Glu-177, Asp-199, and His-381 each contribute to the Zn(2+) site.

Belongs to the peptidase M20B family. Zn(2+) serves as cofactor.

The protein localises to the cytoplasm. It carries out the reaction Release of the N-terminal residue from a tripeptide.. Its function is as follows. Cleaves the N-terminal amino acid of tripeptides. This chain is Peptidase T, found in Streptococcus pneumoniae serotype 2 (strain D39 / NCTC 7466).